A 310-amino-acid chain; its full sequence is Methionyl-tRNA formyltransferase (310 aa).

110–113 (SVLP) contacts (6S)-5,6,7,8-tetrahydrofolate. The tract at residues 283 to 310 (TVQPPGKKSMNAADWARGARAEDIRRAR) is disordered. The span at 299-310 (RGARAEDIRRAR) shows a compositional bias: basic and acidic residues.

It belongs to the Fmt family.

The catalysed reaction is L-methionyl-tRNA(fMet) + (6R)-10-formyltetrahydrofolate = N-formyl-L-methionyl-tRNA(fMet) + (6S)-5,6,7,8-tetrahydrofolate + H(+). Functionally, attaches a formyl group to the free amino group of methionyl-tRNA(fMet). The formyl group appears to play a dual role in the initiator identity of N-formylmethionyl-tRNA by promoting its recognition by IF2 and preventing the misappropriation of this tRNA by the elongation apparatus. The protein is Methionyl-tRNA formyltransferase of Mycolicibacterium gilvum (strain PYR-GCK) (Mycobacterium gilvum (strain PYR-GCK)).